Consider the following 1516-residue polypeptide: Myosin-14 (1516 aa).

The Myosin N-terminal SH3-like domain maps to 7–56; sequence NVGSCVWVEDPEVAWIDGEVIEVKGSDIKVKCTSGKTVAIKVSSAYPKDV. In terms of domain architecture, Myosin motor spans 61 to 738; the sequence is SGVDDMTRLA…QMADLDARRN (678 aa). ATP-binding positions include 155 to 162 and 208 to 216; these read GESGAGKT and NNNSSRFGK. 4 actin-binding regions span residues 494-528, 530-553, 588-612, and 612-634; these read LIEK…YQTF, DHKH…AGDV, FPLL…KQQL, and LVTL…KPNN. 6 IQ domains span residues 741–770, 764–793, 789–818, 812–841, 837–866, and 860–889; these read LGRA…VATN, LRKV…DAAV, RDAA…AAVS, LYFA…DKAA, QDKA…AAIT, and LKKA…AAKE. A coiled-coil region spans residues 890–1056; that stretch reads TGVLEAAKSK…ENKILRQKSL (167 aa). The disordered stretch occupies residues 1061–1085; sequence GHLPPTPVKGSQNGHFSSKESPFNG. A compositionally biased stretch (polar residues) spans 1069-1084; sequence KGSQNGHFSSKESPFN. In terms of domain architecture, Dilute spans 1158–1463; the sequence is DRLVQMIGSA…IANMRVLMTE (306 aa).

The protein belongs to the TRAFAC class myosin-kinesin ATPase superfamily. Myosin family. Plant myosin class XI subfamily. As to quaternary structure, homodimer.

Myosin heavy chain that is required for the cell cycle-regulated transport of various organelles and proteins for their segregation. Functions by binding with its tail domain to receptor proteins on organelles and exerting force with its N-terminal motor domain against actin filaments, thereby transporting its cargo along polarized actin cables. This Arabidopsis thaliana (Mouse-ear cress) protein is Myosin-14 (XI-H).